The sequence spans 103 residues: Large ribosomal subunit protein uL24 (103 aa).

This sequence belongs to the universal ribosomal protein uL24 family. Part of the 50S ribosomal subunit.

Functionally, one of two assembly initiator proteins, it binds directly to the 5'-end of the 23S rRNA, where it nucleates assembly of the 50S subunit. One of the proteins that surrounds the polypeptide exit tunnel on the outside of the subunit. The polypeptide is Large ribosomal subunit protein uL24 (Ruegeria pomeroyi (strain ATCC 700808 / DSM 15171 / DSS-3) (Silicibacter pomeroyi)).